The sequence spans 310 residues: uncharacterized protein (310 aa).

A disordered region spans residues 1-70 (MAGNSQRRGA…ARGRTDETET (70 aa)). Residues 49–62 (AAKRAKAQQRRPAR) show a composition bias toward basic residues. 3 residues coordinate S-adenosyl-L-methionine: G262, V282, and L291.

Belongs to the class IV-like SAM-binding methyltransferase superfamily. RNA methyltransferase TrmH family.

This is an uncharacterized protein from Mycobacterium ulcerans (strain Agy99).